The following is a 427-amino-acid chain: Flotillin-1 (427 aa).

Residues S19, S163, and S385 each carry the phosphoserine modification.

The protein belongs to the band 7/mec-2 family. Flotillin subfamily. As to quaternary structure, heterooligomeric complex of flotillin-1 and flotillin-2 and caveolin-1 and caveolin-2. Interacts with ECPAS.

The protein localises to the cell membrane. It localises to the endosome. It is found in the membrane. The protein resides in the caveola. Its subcellular location is the melanosome. The protein localises to the membrane raft. May act as a scaffolding protein within caveolar membranes, functionally participating in formation of caveolae or caveolae-like vesicles. This is Flotillin-1 (FLOT1) from Bos taurus (Bovine).